We begin with the raw amino-acid sequence, 315 residues long: D-alanine--D-alanine ligase (315 aa).

Residues 101–297 (KHIFRSLNID…FNELVKIIIE (197 aa)) form the ATP-grasp domain. 128 to 181 (KIDYPYVLKPINEGSSIGVYIIFSHEDYLELKNNSSTIMEKMIVEEYIPGIELH) contacts ATP. Mg(2+) contacts are provided by aspartate 249, glutamate 263, and asparagine 265.

The protein belongs to the D-alanine--D-alanine ligase family. Mg(2+) is required as a cofactor. Mn(2+) serves as cofactor.

The protein localises to the cytoplasm. The catalysed reaction is 2 D-alanine + ATP = D-alanyl-D-alanine + ADP + phosphate + H(+). It functions in the pathway cell wall biogenesis; peptidoglycan biosynthesis. Cell wall formation. This chain is D-alanine--D-alanine ligase, found in Wolbachia pipientis wMel.